The primary structure comprises 143 residues: Small ribosomal subunit protein uS12 (143 aa).

The segment covering 1-20 has biased composition (basic residues); sequence MGKPRGLRTARKLKNHRREQ. A disordered region spans residues 1-28; that stretch reads MGKPRGLRTARKLKNHRREQRWHDKDYK. P62 bears the Hydroxyproline mark.

This sequence belongs to the universal ribosomal protein uS12 family. Component of the 40S small ribosomal subunit.

It localises to the cytoplasm. The protein localises to the cytosol. It is found in the rough endoplasmic reticulum. In Lumbricus rubellus (Humus earthworm), this protein is Small ribosomal subunit protein uS12 (RPS23).